A 211-amino-acid chain; its full sequence is C-type lectin domain-containing protein 158 (211 aa).

The first 16 residues, 1-16 (MQKFILSAFVVALVAA), serve as a signal peptide directing secretion.

This Caenorhabditis elegans protein is C-type lectin domain-containing protein 158 (clec-158).